We begin with the raw amino-acid sequence, 301 residues long: Probable alpha-L-glutamate ligase 1 (301 aa).

Residues 104–287 form the ATP-grasp domain; that stretch reads LQLLSRKGIG…VTEPIVEYIE (184 aa). ATP-binding positions include Lys141, 178 to 179, Asp187, and 211 to 213; these read EY and RSN. Asp248, Glu260, and Asn262 together coordinate Mg(2+). Mn(2+) is bound by residues Asp248, Glu260, and Asn262.

This sequence belongs to the RimK family. Mg(2+) serves as cofactor. Mn(2+) is required as a cofactor.

The polypeptide is Probable alpha-L-glutamate ligase 1 (Shewanella sp. (strain W3-18-1)).